Reading from the N-terminus, the 113-residue chain is ATP-dependent Clp protease adapter protein ClpS (113 aa).

Positions 1–11 are enriched in basic and acidic residues; that stretch reads MHRDLHMMSDR. A disordered region spans residues 1–25; that stretch reads MHRDLHMMSDRSEDDGDTSILTATK.

This sequence belongs to the ClpS family. In terms of assembly, binds to the N-terminal domain of the chaperone ClpA.

Functionally, involved in the modulation of the specificity of the ClpAP-mediated ATP-dependent protein degradation. This chain is ATP-dependent Clp protease adapter protein ClpS, found in Roseobacter denitrificans (strain ATCC 33942 / OCh 114) (Erythrobacter sp. (strain OCh 114)).